The primary structure comprises 322 residues: Phosphatidylserine decarboxylase proenzyme (322 aa).

Catalysis depends on charge relay system; for autoendoproteolytic cleavage activity residues aspartate 90, histidine 147, and serine 254. Residue serine 254 is the Schiff-base intermediate with substrate; via pyruvic acid; for decarboxylase activity of the active site. A Pyruvic acid (Ser); by autocatalysis modification is found at serine 254. The tract at residues 293–322 (PDAEPAPLPAEEIEAEHDASPLVDDKKDQV) is disordered. The span at 308 to 322 (EHDASPLVDDKKDQV) shows a compositional bias: basic and acidic residues.

This sequence belongs to the phosphatidylserine decarboxylase family. PSD-B subfamily. Prokaryotic type I sub-subfamily. As to quaternary structure, heterodimer of a large membrane-associated beta subunit and a small pyruvoyl-containing alpha subunit. The cofactor is pyruvate. Post-translationally, is synthesized initially as an inactive proenzyme. Formation of the active enzyme involves a self-maturation process in which the active site pyruvoyl group is generated from an internal serine residue via an autocatalytic post-translational modification. Two non-identical subunits are generated from the proenzyme in this reaction, and the pyruvate is formed at the N-terminus of the alpha chain, which is derived from the carboxyl end of the proenzyme. The autoendoproteolytic cleavage occurs by a canonical serine protease mechanism, in which the side chain hydroxyl group of the serine supplies its oxygen atom to form the C-terminus of the beta chain, while the remainder of the serine residue undergoes an oxidative deamination to produce ammonia and the pyruvoyl prosthetic group on the alpha chain. During this reaction, the Ser that is part of the protease active site of the proenzyme becomes the pyruvoyl prosthetic group, which constitutes an essential element of the active site of the mature decarboxylase.

It localises to the cell membrane. The catalysed reaction is a 1,2-diacyl-sn-glycero-3-phospho-L-serine + H(+) = a 1,2-diacyl-sn-glycero-3-phosphoethanolamine + CO2. It participates in phospholipid metabolism; phosphatidylethanolamine biosynthesis; phosphatidylethanolamine from CDP-diacylglycerol: step 2/2. Catalyzes the formation of phosphatidylethanolamine (PtdEtn) from phosphatidylserine (PtdSer). This Escherichia coli O139:H28 (strain E24377A / ETEC) protein is Phosphatidylserine decarboxylase proenzyme.